The following is a 124-amino-acid chain: Small ribosomal subunit protein uS12 (124 aa).

The disordered stretch occupies residues 1–22; sequence MATINQLVRKPRKRKVAKSDVP. Asp-89 is subject to 3-methylthioaspartic acid. The tract at residues 101–124 is disordered; the sequence is TLDTQGVQNRKQGRSKYGAKRPKS. The segment covering 111–124 has biased composition (basic residues); that stretch reads KQGRSKYGAKRPKS.

This sequence belongs to the universal ribosomal protein uS12 family. As to quaternary structure, part of the 30S ribosomal subunit. Contacts proteins S8 and S17. May interact with IF1 in the 30S initiation complex.

With S4 and S5 plays an important role in translational accuracy. Its function is as follows. Interacts with and stabilizes bases of the 16S rRNA that are involved in tRNA selection in the A site and with the mRNA backbone. Located at the interface of the 30S and 50S subunits, it traverses the body of the 30S subunit contacting proteins on the other side and probably holding the rRNA structure together. The combined cluster of proteins S8, S12 and S17 appears to hold together the shoulder and platform of the 30S subunit. In Marinobacter nauticus (strain ATCC 700491 / DSM 11845 / VT8) (Marinobacter aquaeolei), this protein is Small ribosomal subunit protein uS12.